The primary structure comprises 234 residues: 2,3-bisphosphoglycerate-dependent phosphoglycerate mutase (234 aa).

Substrate is bound by residues 10–17 (RHGSSIWN), 23–24 (TG), Arg-62, 89–92 (ERHY), Lys-100, 116–117 (RR), and 186–187 (GN). His-11 functions as the Tele-phosphohistidine intermediate in the catalytic mechanism. Catalysis depends on Glu-89, which acts as the Proton donor/acceptor.

The protein belongs to the phosphoglycerate mutase family. BPG-dependent PGAM subfamily. In terms of assembly, homodimer.

It catalyses the reaction (2R)-2-phosphoglycerate = (2R)-3-phosphoglycerate. Its pathway is carbohydrate degradation; glycolysis; pyruvate from D-glyceraldehyde 3-phosphate: step 3/5. Its function is as follows. Catalyzes the interconversion of 2-phosphoglycerate and 3-phosphoglycerate. The protein is 2,3-bisphosphoglycerate-dependent phosphoglycerate mutase of Wigglesworthia glossinidia brevipalpis.